A 276-amino-acid polypeptide reads, in one-letter code: Tumor necrosis factor-inducible gene 6 protein (276 aa).

Positions 1-17 (MIILIYLFVLVWEEAQG) are cleaved as a signal peptide. Positions 36-129 (GVYHREARSG…SERWDAYCYN (94 aa)) constitute a Link domain. 3 cysteine pairs are disulfide-bonded: Cys-58-Cys-127, Cys-82-Cys-103, and Cys-135-Cys-161. Residue Asn-118 is glycosylated (N-linked (GlcNAc...) asparagine). Residues 135–247 (CGGVFTDPKR…GGFQIKYVTV (113 aa)) enclose the CUB domain. Ca(2+) is bound by residues Glu-183, Asp-191, Asp-232, Ser-234, and Val-235. A disulfide bridge connects residues Cys-188 and Cys-210. Asn-258 is a glycosylation site (N-linked (GlcNAc...) asparagine).

In terms of assembly, interacts (via Link domain) with inter-alpha-inhibitor (I-alpha-I) component bikunin. Interacts with ITIH2/HC2; this interaction is required for transesterification of the HC to hyaluronan. Interacts (via Link and CUB domains) with ITIH1. Chondroitin sulfate may be required for the stability of the complex. Interacts (via Link domain) with various C-X-C and C-C chemokines including PF4, CXCL8, CXCL11, CXCL12, CCL2, CCL7, CCL19, CCL21, and CCL27; this interaction interferes with chemokine binding to glycosaminoglycans. Interacts (primarily via Link domain) with BMP2; this interaction is inhibited by hyaluronan. Interacts (via both Link and CUB domains) with TNFSF11. Interacts (via CUB domain) with FN1 (via type III repeats 9-14); this interaction enhances fibronectin fibril assembly. TNFAIP6 may act as a bridging molecule between FN1 and THBS1. In terms of tissue distribution, vascular smooth muscle cells.

The protein localises to the secreted. In terms of biological role, major regulator of extracellular matrix organization during tissue remodeling. Catalyzes the transfer of a heavy chain (HC) from inter-alpha-inhibitor (I-alpha-I) complex to hyaluronan. Cleaves the ester bond between the C-terminus of the HC and GalNAc residue of the chondroitin sulfate chain in I-alpha-I complex followed by transesterification of the HC to hyaluronan. In the process, potentiates the antiprotease function of I-alpha-I complex through release of free bikunin. Acts as a catalyst in the formation of hyaluronan-HC oligomers and hyaluronan-rich matrix surrounding the cumulus cell-oocyte complex, a necessary step for oocyte fertilization. Assembles hyaluronan in pericellular matrices that serve as platforms for receptor clustering and signaling. Enables binding of hyaluronan deposited on the surface of macrophages to LYVE1 on lymphatic endothelium and facilitates macrophage extravasation. Alters hyaluronan binding to functionally latent CD44 on vascular endothelium, switching CD44 into an active state that supports leukocyte rolling. Modulates the interaction of chemokines with extracellular matrix components and proteoglycans on endothelial cell surface, likely preventing chemokine gradient formation. In a negative feedback mechanism, may limit excessive neutrophil recruitment at inflammatory sites by antagonizing the association of CXCL8 with glycosaminoglycans on vascular endothelium. Has a role in osteogenesis and bone remodeling. Inhibits BMP2-dependent differentiation of mesenchymal stem cell to osteoblasts. Protects against bone erosion during inflammation by inhibiting TNFSF11/RANKL-dependent osteoclast activation. In Oryctolagus cuniculus (Rabbit), this protein is Tumor necrosis factor-inducible gene 6 protein (TNFAIP6).